Reading from the N-terminus, the 218-residue chain is Probable GTP-binding protein EngB (218 aa).

An EngB-type G domain is found at 23-200 (EVPEIAFVGR…AQLLWQWAHP (178 aa)). GTP is bound by residues 31 to 38 (GRSNAGKS), 58 to 62 (GRTQH), 80 to 83 (DLPG), 150 to 153 (TKAD), and 179 to 181 (FSA). Mg(2+)-binding residues include S38 and T60.

The protein belongs to the TRAFAC class TrmE-Era-EngA-EngB-Septin-like GTPase superfamily. EngB GTPase family. Mg(2+) is required as a cofactor.

In terms of biological role, necessary for normal cell division and for the maintenance of normal septation. The sequence is that of Probable GTP-binding protein EngB from Acidovorax ebreus (strain TPSY) (Diaphorobacter sp. (strain TPSY)).